Consider the following 30-residue polypeptide: Alpha-conotoxin EIVA (30 aa).

Disulfide bonds link cysteine 2–cysteine 16, cysteine 3–cysteine 11, and cysteine 14–cysteine 24. 5 positions are modified to 4-hydroxyproline: proline 7, proline 13, proline 21, proline 22, and proline 27. Glycine 30 bears the Glycine amide mark.

Expressed by the venom duct.

The protein localises to the secreted. Functionally, alpha-conotoxins act on postsynaptic membranes, they bind to the nicotinic acetylcholine receptors (nAChR) and thus inhibit them. This toxin binds with high affinity to both fetal (alpha-1-beta-1-epsilon-delta (CHRNA1-CHRNB1-CHRND-CHRNE) subunits) and adult (alpha-1/beta-1/gamma/delta subunits) mammalian muscle nicotinic acetylcholine receptors (nAChR). This chain is Alpha-conotoxin EIVA, found in Conus ermineus (Agate cone).